The sequence spans 153 residues: Glycosylation-dependent cell adhesion molecule 1 (153 aa).

The first 18 residues, 1–18 (MKFLCVLLLASLAATSLA), serve as a signal peptide directing secretion. An O-linked (GalNAc...) threonine; partial glycan is attached at T34. Phosphoserine is present on residues S47, S52, S56, S58, and S64. An O-linked (HexNAc...) serine glycan is attached at S78. N-linked (GlcNAc...) asparagine glycosylation occurs at N95. Positions 95–115 (NATLGSEETTEHTPSDASTTE) are disordered. Residue T104 is glycosylated (O-linked (GalNAc...) threonine).

Belongs to the PP3/GlyCAM-1 family. Highly and specifically expressed in the lactating mammary gland.

The protein resides in the membrane. The protein is Glycosylation-dependent cell adhesion molecule 1 (GLYCAM1) of Bos taurus (Bovine).